The following is a 639-amino-acid chain: tRNA 5-methylaminomethyl-2-thiouridine biosynthesis bifunctional protein MnmC (639 aa).

A tRNA (mnm(5)s(2)U34)-methyltransferase region spans residues methionine 1–alanine 228. Residues valine 254–glutamine 639 form an FAD-dependent cmnm(5)s(2)U34 oxidoreductase region.

The protein in the N-terminal section; belongs to the methyltransferase superfamily. tRNA (mnm(5)s(2)U34)-methyltransferase family. In the C-terminal section; belongs to the DAO family. It depends on FAD as a cofactor.

Its subcellular location is the cytoplasm. It catalyses the reaction 5-aminomethyl-2-thiouridine(34) in tRNA + S-adenosyl-L-methionine = 5-methylaminomethyl-2-thiouridine(34) in tRNA + S-adenosyl-L-homocysteine + H(+). Its function is as follows. Catalyzes the last two steps in the biosynthesis of 5-methylaminomethyl-2-thiouridine (mnm(5)s(2)U) at the wobble position (U34) in tRNA. Catalyzes the FAD-dependent demodification of cmnm(5)s(2)U34 to nm(5)s(2)U34, followed by the transfer of a methyl group from S-adenosyl-L-methionine to nm(5)s(2)U34, to form mnm(5)s(2)U34. This is tRNA 5-methylaminomethyl-2-thiouridine biosynthesis bifunctional protein MnmC from Acidovorax sp. (strain JS42).